We begin with the raw amino-acid sequence, 78 residues long: Exodeoxyribonuclease 7 small subunit (78 aa).

Belongs to the XseB family. In terms of assembly, heterooligomer composed of large and small subunits.

The protein resides in the cytoplasm. It carries out the reaction Exonucleolytic cleavage in either 5'- to 3'- or 3'- to 5'-direction to yield nucleoside 5'-phosphates.. Its function is as follows. Bidirectionally degrades single-stranded DNA into large acid-insoluble oligonucleotides, which are then degraded further into small acid-soluble oligonucleotides. In Cutibacterium acnes (strain DSM 16379 / KPA171202) (Propionibacterium acnes), this protein is Exodeoxyribonuclease 7 small subunit.